Consider the following 444-residue polypeptide: Transcription factor PIF5 (444 aa).

The tract at residues 26 to 39 (EDELVELLWRDGQV) is involved in interaction with phyB. 2 disordered regions span residues 154–265 (HCGS…NLSE) and 416–444 (MLGF…GKIG). The span at 155–171 (CGSNQSTNIHQATTLPV) shows a compositional bias: polar residues. Residues 175 to 185 (DRSKNVEERLD) are compositionally biased toward basic and acidic residues. Low complexity predominate over residues 187-197 (SSGGSSGCSYG). The span at 224-244 (ESVSQSDIGLTSTDDQTMGNK) shows a compositional bias: polar residues. A compositionally biased stretch (basic and acidic residues) spans 256–265 (RAAEVHNLSE). In terms of domain architecture, bHLH spans 256-305 (RAAEVHNLSERRRRDRINERMKALQELIPHCSRTDKASILDEAIDYLKSL). The span at 424–437 (GPQSQLSAPATTDS) shows a compositional bias: polar residues. Phosphoserine is present on Ser-437.

Homodimer. Interacts specifically with the Pfr form of phytochrome B and with TOC1/APRR1. May form a heterodimer with PIF3. Interacts with PHYB, CRY1 and CRY2 in the nucleus in response to low blue light (LBL). Interacts with TOPP4. Associates to PTAC12/HMR/PAP5 which acts as a transcriptional coactivator. Post-translationally, phosphorylated. Additional phosphorylations induced within 60 seconds following phytochrome B photoactivation. Dephosphorylated by TOPP4 during photomorphogenesis, leading to subsequent degradation of PIF5 by the proteasomal pathway. As to expression, mainly expressed in leaves and seedlings, and, to a lower extent, in stems, fruits, flowers and roots.

The protein resides in the nucleus. Its function is as follows. Transcription factor acting negatively in the phytochrome B signaling pathway to promote the shade-avoidance response. Regulates PHYB abundance at the post-transcriptional level, possibly via the ubiquitin-proteasome pathway. Promotes ethylene activity in the dark. May regulate the expression of a subset of genes by binding to the G-box motif. Might be involved in the integration of light-signals to control both circadian and photomorphogenic processes. Activated by CRY1 and CRY2 in response to low blue light (LBL) by direct binding at chromatin on E-box variant 5'-CA[CT]GTG-3' to stimulate specific gene expression to adapt global physiology (e.g. hypocotyl elongation in low blue light). This Arabidopsis thaliana (Mouse-ear cress) protein is Transcription factor PIF5.